Reading from the N-terminus, the 221-residue chain is Nucleolar protein 3 (221 aa).

Gly2 carries N-myristoyl glycine lipidation. Residues 4–95 (MQERPSETID…MPDPAWDWQH (92 aa)) enclose the CARD domain. Residues 20–70 (VETLQADSGLLLDALVARGVLTGPEYEALDALPDAERRVRRLLLLVQSKGE) form an essential for interaction with BAX region. Residues 107–221 (PPCPGHWTPE…GDESEGCENT (115 aa)) are disordered. Positions 132-143 (EEEEIGGPEDSE) are enriched in acidic residues. Position 149 is a phosphothreonine; by CK2 (Thr149). Composition is skewed to acidic residues over residues 165 to 201 (PDLE…EPEP) and 209 to 221 (FQEG…CENT).

As to quaternary structure, oligomerizes (via CARD doamin). Interacts (via CARD domain) with CASP2; inhibits CASP2 activity in a phosphorylation-dependent manner. Interacts with CASP8; decreases CASP8 activity in a mitochondria localization- and phosphorylation-dependent manner and this interaction is dissociated by calcium. Interacts with TFPT; translocates NOL3 into the nucleus and negatively regulated TFPT-induced cell death. Interacts directly (via CARD domain) with FAS and FADD (via DED domain); inhibits death-inducing signaling complex (DISC) assembly by inhibiting the increase in FAS-FADD binding induced by FAS activation. Interacts (via CARD domain) with BAX (via a C-terminal 33 residues); inhibits BAX activation and translocation and consequently cytochrome c release from mitochondria. Interacts with PPM1G; may dephosphorylate NOL3. Interacts (via CARD domain) with BBC3 (via BH3 domain); preventing the association of BBC3 with BCL2 and resulting in activation of CASP8. Interacts (via CARD domain) with BAD(via BH3 domain); preventing the association of BAD with BCL2. Interacts directly (via CARD domain) with TNFRSF1A; inhibits TNF-signaling pathway. In terms of processing, phosphorylation at Thr-149 is required for its antiapoptotic effect by blocking death-inducing signaling complex (DISC) activity through the control of interaction with CASP8. Phosphorylation at Thr-149 results in translocation to mitochondria and this translocation enables the binding to CASP8. Dephosphorylated at Thr-149 by calcineurin; doesn't inhibit the association between FADD and CASP8 and the consequent apoptosis. Post-translationally, polyubiquitinated by MDM2; promoting proteasomal-dependent degradation in response to apoptotic stimuli. In terms of tissue distribution, highly expressed in skeletal muscle, heart and medulla.

It localises to the cytoplasm. Its subcellular location is the mitochondrion. The protein localises to the sarcoplasmic reticulum. It is found in the membrane. Apoptosis repressor that blocks multiple modes of cell death. Inhibits extrinsic apoptotic pathways through two different ways. Firstly by interacting with FAS and FADD upon FAS activation blocking death-inducing signaling complex (DISC) assembly. Secondly by interacting with CASP8 in a mitochondria localization- and phosphorylation-dependent manner, limiting the amount of soluble CASP8 available for DISC-mediated activation. Inhibits intrinsic apoptotic pathway in response to a wide range of stresses, through its interaction with BAX resulting in BAX inactivation, preventing mitochondrial dysfunction and release of pro-apoptotic factors. Inhibits calcium-mediated cell death by functioning as a cytosolic calcium buffer, dissociating its interaction with CASP8 and maintaining calcium homeostasis. Negatively regulates oxidative stress-induced apoptosis by phosphorylation-dependent suppression of the mitochondria-mediated intrinsic pathway, by blocking CASP2 activation and BAX translocation. Negatively regulates hypoxia-induced apoptosis in part by inhibiting the release of cytochrome c from mitochondria in a caspase-independent manner. Also inhibits TNF-induced necrosis by preventing TNF-signaling pathway through TNFRSF1A interaction abrogating the recruitment of RIPK1 to complex I. Finally through its role as apoptosis repressor, promotes vascular remodeling through inhibition of apoptosis and stimulation of proliferation, in response to hypoxia. Inhibits too myoblast differentiation through caspase inhibition. The polypeptide is Nucleolar protein 3 (Nol3) (Rattus norvegicus (Rat)).